A 478-amino-acid polypeptide reads, in one-letter code: Putative multidrug resistance outer membrane protein MdtQ (478 aa).

The first 21 residues, M1–G21, serve as a signal peptide directing secretion. C22 carries N-palmitoyl cysteine lipidation. C22 carries the S-diacylglycerol cysteine lipid modification.

It belongs to the outer membrane factor (OMF) (TC 1.B.17) family.

Its subcellular location is the cell outer membrane. Could be involved in resistance to puromycin, acriflavine and tetraphenylarsonium chloride. In Shigella flexneri, this protein is Putative multidrug resistance outer membrane protein MdtQ (mdtQ).